The chain runs to 435 residues: Glutamyl-tRNA reductase (435 aa).

Substrate is bound by residues 49 to 52, serine 109, 114 to 116, and glutamine 120; these read TCNR and ETQ. Cysteine 50 (nucleophile) is an active-site residue. An NADP(+)-binding site is contributed by 189 to 194; sequence GAGEMS.

It belongs to the glutamyl-tRNA reductase family. As to quaternary structure, homodimer.

It catalyses the reaction (S)-4-amino-5-oxopentanoate + tRNA(Glu) + NADP(+) = L-glutamyl-tRNA(Glu) + NADPH + H(+). Its pathway is porphyrin-containing compound metabolism; protoporphyrin-IX biosynthesis; 5-aminolevulinate from L-glutamyl-tRNA(Glu): step 1/2. Catalyzes the NADPH-dependent reduction of glutamyl-tRNA(Glu) to glutamate 1-semialdehyde (GSA). The sequence is that of Glutamyl-tRNA reductase from Listeria monocytogenes serotype 4b (strain F2365).